We begin with the raw amino-acid sequence, 102 residues long: Citrate lyase acyl carrier protein (102 aa).

Serine 14 carries the post-translational modification O-(phosphoribosyl dephospho-coenzyme A)serine.

It belongs to the CitD family. Oligomer with a subunit composition of (alpha,beta,gamma)6.

The protein resides in the cytoplasm. Covalent carrier of the coenzyme of citrate lyase. This is Citrate lyase acyl carrier protein from Streptococcus mutans serotype c (strain ATCC 700610 / UA159).